We begin with the raw amino-acid sequence, 175 residues long: Peptide deformylase (175 aa).

Residues Cys96 and His138 each contribute to the Fe cation site. Glu139 is a catalytic residue. A Fe cation-binding site is contributed by His142.

It belongs to the polypeptide deformylase family. It depends on Fe(2+) as a cofactor.

It catalyses the reaction N-terminal N-formyl-L-methionyl-[peptide] + H2O = N-terminal L-methionyl-[peptide] + formate. In terms of biological role, removes the formyl group from the N-terminal Met of newly synthesized proteins. Requires at least a dipeptide for an efficient rate of reaction. N-terminal L-methionine is a prerequisite for activity but the enzyme has broad specificity at other positions. In Campylobacter jejuni subsp. jejuni serotype O:2 (strain ATCC 700819 / NCTC 11168), this protein is Peptide deformylase.